A 169-amino-acid chain; its full sequence is Large ribosomal subunit protein uL5 (169 aa).

Belongs to the universal ribosomal protein uL5 family. In terms of assembly, part of the 50S ribosomal subunit; contacts the 5S rRNA and probably tRNA. Forms a bridge to the 30S subunit in the 70S ribosome.

This is one of the proteins that bind and probably mediate the attachment of the 5S RNA into the large ribosomal subunit, where it forms part of the central protuberance. In the 70S ribosome it contacts protein S13 of the 30S subunit (bridge B1b), connecting the 2 subunits; this bridge is implicated in subunit movement. May contact the P site tRNA; the 5S rRNA and some of its associated proteins might help stabilize positioning of ribosome-bound tRNAs. The polypeptide is Large ribosomal subunit protein uL5 (Cenarchaeum symbiosum (strain A)).